The primary structure comprises 185 residues: Ribosome-recycling factor (185 aa).

The protein belongs to the RRF family.

The protein resides in the cytoplasm. Functionally, responsible for the release of ribosomes from messenger RNA at the termination of protein biosynthesis. May increase the efficiency of translation by recycling ribosomes from one round of translation to another. This is Ribosome-recycling factor from Saccharophagus degradans (strain 2-40 / ATCC 43961 / DSM 17024).